Here is a 309-residue protein sequence, read N- to C-terminus: Porphobilinogen deaminase (309 aa).

Cysteine 243 is modified (S-(dipyrrolylmethanemethyl)cysteine).

Belongs to the HMBS family. As to quaternary structure, monomer. Dipyrromethane serves as cofactor.

It catalyses the reaction 4 porphobilinogen + H2O = hydroxymethylbilane + 4 NH4(+). Its pathway is porphyrin-containing compound metabolism; protoporphyrin-IX biosynthesis; coproporphyrinogen-III from 5-aminolevulinate: step 2/4. Its function is as follows. Tetrapolymerization of the monopyrrole PBG into the hydroxymethylbilane pre-uroporphyrinogen in several discrete steps. In Deinococcus radiodurans (strain ATCC 13939 / DSM 20539 / JCM 16871 / CCUG 27074 / LMG 4051 / NBRC 15346 / NCIMB 9279 / VKM B-1422 / R1), this protein is Porphobilinogen deaminase (hemC).